The primary structure comprises 235 residues: Probable inactive serine protease 37 (235 aa).

An N-terminal signal peptide occupies residues 1–19; the sequence is MKFTFCLTVLAGTFFSAHS. The 214-residue stretch at 20 to 233 folds into the Peptidase S1 domain; that stretch reads SVQKDDPSPY…YVSWIESTTK (214 aa). 3 cysteine pairs are disulfide-bonded: Cys40/Cys56, Cys131/Cys198, and Cys163/Cys177.

Belongs to the peptidase S1 family.

It is found in the cytoplasmic vesicle. The protein localises to the secretory vesicle. It localises to the acrosome. The protein resides in the secreted. Plays a role in male fertility. May have a role in sperm migration or binding to zona-intact eggs. Involved in the activation of the proacrosin/acrosin system. The protein is Probable inactive serine protease 37 of Bos taurus (Bovine).